Here is a 128-residue protein sequence, read N- to C-terminus: Putative esterase aq_1494 (128 aa).

The active site involves aspartate 15.

It belongs to the 4-hydroxybenzoyl-CoA thioesterase family.

In Aquifex aeolicus (strain VF5), this protein is Putative esterase aq_1494.